Here is a 209-residue protein sequence, read N- to C-terminus: ATP-dependent Clp protease proteolytic subunit (209 aa).

The active-site Nucleophile is the S113. The active site involves H138.

The protein belongs to the peptidase S14 family. Fourteen ClpP subunits assemble into 2 heptameric rings which stack back to back to give a disk-like structure with a central cavity, resembling the structure of eukaryotic proteasomes.

The protein resides in the cytoplasm. It carries out the reaction Hydrolysis of proteins to small peptides in the presence of ATP and magnesium. alpha-casein is the usual test substrate. In the absence of ATP, only oligopeptides shorter than five residues are hydrolyzed (such as succinyl-Leu-Tyr-|-NHMec, and Leu-Tyr-Leu-|-Tyr-Trp, in which cleavage of the -Tyr-|-Leu- and -Tyr-|-Trp bonds also occurs).. Cleaves peptides in various proteins in a process that requires ATP hydrolysis. Has a chymotrypsin-like activity. Plays a major role in the degradation of misfolded proteins. The polypeptide is ATP-dependent Clp protease proteolytic subunit (Blochmanniella floridana).